Consider the following 466-residue polypeptide: Amino acid permease 4 (466 aa).

At 1 to 22 (MDVPRPAFKCFDDDGRLKRSGT) the chain is on the cytoplasmic side. Transmembrane regions (helical) follow at residues 23 to 43 (VWTASAHIITAVIGSGVLSLA) and 44 to 64 (WAIGQLGWIAGPTVMLLFSFV). The Cytoplasmic portion of the chain corresponds to 65–111 (TYYSSTLLSDCYRTGDPVSGKRNYTYMDAVRSILGGFRFKICGLIQY). The chain crosses the membrane as a helical span at residues 112-132 (LNLFGITVGYTIAASISMMAI). The Extracellular portion of the chain corresponds to 133–177 (KRSNCFHESGGKNPCHMSSNPYMIMFGVTEILLSQIKDFDQIWWL). The helical transmembrane segment at 178 to 198 (SIVAAIMSFTYSAIGLALGII) threads the bilayer. Residues 199-226 (QVAANGVVKGSLTGISIGAVTQTQKIWR) lie on the Cytoplasmic side of the membrane. The chain crosses the membrane as a helical span at residues 227-247 (TFQALGDIAFAYSYSVVLIEI). The Extracellular segment spans residues 248–266 (QDTVRSPPAESKTMKIATR). The helical transmembrane segment at 267–287 (ISIAVTTTFYMLCGCMGYAAF) threads the bilayer. Over 288 to 290 (GDK) the chain is Cytoplasmic. Residues 291–311 (APGNLLTGFGFYNPFWLLDVA) form a helical membrane-spanning segment. Residues 312–313 (NA) are Extracellular-facing. Residues 314 to 334 (AIVIHLVGAYQVFAQPIFAFI) traverse the membrane as a helical segment. The Cytoplasmic portion of the chain corresponds to 335 to 369 (EKQAAARFPDSDLVTKEYEIRIPGFRSPYKVNVFR). The chain crosses the membrane as a helical span at residues 370–390 (AVYRSGFVVLTTVISMLMPFF). The Extracellular segment spans residues 391–392 (ND). A helical transmembrane segment spans residues 393 to 413 (VVGILGALGFWPLTVYFPVEM). Over 414–435 (YIRQRKVERWSMKWVCLQMLSC) the chain is Cytoplasmic. Residues 436–456 (GCLMITLVAGVGSIAGVMLDL) traverse the membrane as a helical segment. Residues 457-466 (KVYKPFKTTY) are Extracellular-facing.

The protein belongs to the amino acid/polyamine transporter 2 family. Amino acid/auxin permease (AAAP) (TC 2.A.18.2) subfamily. As to expression, expressed in leaves, stems and flowers.

Its subcellular location is the cell membrane. With respect to regulation, inhibited by 2,4-dinitrophenol. Amino acid-proton symporter. Stereospecific transporter with a broad specificity for neutral amino acids, favoring small amino acids such as alanine, asparagine and glutamine. Also accepts large aromatic residues such as in phenlalanine or tyrosine. The polypeptide is Amino acid permease 4 (AAP4) (Arabidopsis thaliana (Mouse-ear cress)).